The chain runs to 612 residues: Breast cancer type 1 susceptibility protein homolog (612 aa).

Residues 21-61 (CGICCSTYKDPILSTCFHIFCRSCINACFERKRKVQCPICR) form an RING-type zinc finger. The tract at residues 140–173 (RRKRPSRPQPPSAFAEEPAEPVEPPEPATKQPVE) is disordered. BRCT domains are found at residues 415–477 (RFAE…DYTI) and 505–603 (EHGK…PYKA).

As to quaternary structure, heterodimer (via RING-type zinc finger) with brd-1 to form the core CeBCD complex. Brc-1-brd-1 heterodimer-containing CeBCD complexes bound to chromatin are activated as an E3-ubiquitin ligase in response to DNA damage. The heterodimer interacts with the recombinase rad-51 following ionizing irradiation; the interaction is direct. The heterodimer interacts the E2-ubiquitin-conjugating enzyme let-70 following ionizing irradiation. The heterodimer interacts with the pro-crossover proteins msh-5 and syp-3. In terms of processing, phosphorylation of CeBCD complexes is required for E3 ubiquitin-protein ligase activity.

It is found in the nucleus. The protein localises to the chromosome. Its subcellular location is the cytoplasm. It catalyses the reaction S-ubiquitinyl-[E2 ubiquitin-conjugating enzyme]-L-cysteine + [acceptor protein]-L-lysine = [E2 ubiquitin-conjugating enzyme]-L-cysteine + N(6)-ubiquitinyl-[acceptor protein]-L-lysine.. It participates in protein modification; protein ubiquitination. Its activity is regulated as follows. E3 ubiquitin-protein ligase activity of CeBCD complexes occurs at DNA damage sites. Following DNA damage, E3 ubiquitin-protein ligase activity is reduced by caffeine treatment (inhibitor of ATM and ATK kinase activity). Functionally, E3 ubiquitin-protein ligase that specifically mediates the formation of polyubiquitin chains and plays a central role in DNA repair. Plays a role in triggering cellular responses at damage sites in response to DNA damage that may be induced by UV and ionizing radiation for example. Functions in double-strand break repair, and is required for homologous recombination between sister chromatids in meiotic and mitotic cells. In particular, protects against chromosome non-disjunction and nuclear fragmentation during meiotic double-strand break repair to ensure sister chromatid recombination and aid chromosome stability. Required for normal cell cycle progression. Along with brap-2 modulates the expression of cell cycle arrest protein cki-1 in response to increased levels of reactive oxygen species. Constituent of the CeBCD complex that possesses E3 ubiquitin-protein ligase activity. When bound to chromatin, the brc-1-brd-1 heterodimer within the CeBCD complex is inactive during normal conditions, but in response to DNA damage, the brc-1-brd-1 heterodimer associates with other proteins such as the recombinase rad-51 or the E2-ubiquitin-conjugating enzyme let-70, which activate the CeBCD complex as an E3-ubiquitin ligase. Moreover, association between the brc-1-brd-1 heterodimer and rad-51 and let-70, probably requires DNA checkpoint proteins such as atl-1 and mre-11 in order to induce ubiquitination at DNA damage sites. To this end, the brc-1-brd-1 heterodimer coordinates a diverse range of cellular pathways such as DNA damage repair, ubiquitination and transcriptional regulation to maintain genomic stability. The chain is Breast cancer type 1 susceptibility protein homolog from Caenorhabditis elegans.